Here is a 67-residue protein sequence, read N- to C-terminus: Probable Sec-independent protein translocase protein TatE (67 aa).

A helical transmembrane segment spans residues 4–21 (ISITKLLVVAALVVLLFG).

This sequence belongs to the TatA/E family. TatE subfamily.

It localises to the cell inner membrane. Part of the twin-arginine translocation (Tat) system that transports large folded proteins containing a characteristic twin-arginine motif in their signal peptide across membranes. TatE shares overlapping functions with TatA. This Salmonella arizonae (strain ATCC BAA-731 / CDC346-86 / RSK2980) protein is Probable Sec-independent protein translocase protein TatE.